The sequence spans 429 residues: MSQIVDIRAREILDSRGNPTIEADVILESGVVGRACAPSGASTGSREALELRDGDKSRYLGKGVRTAVQNVNSSIHELLVGQSVFEQKALDEKMIAFDGTENKSKLGANATLAVSLAAAHAAAAEQKLPLFQYIANLRGQTTLTMPVPMMNILNGGAHADNTVDIQEFMIEPVGFTSFAEALRAGAEVFHSLKSVLKKQGLNTAVGDEGGFAPNLRSNEEAITVILQAIEQTGYKAGSDIMLALDCASSEFYKNGQYILEGEGNKSFTSNQFADYLAGLVKQYPIISIEDGLDESDWEGWSYLTSILGDKIQLVGDDLFVTNPKILQRGIDEKVGNSILIKYNQIGTLTETLDAIYLAKANGYTTVISHRSGETEDSTIADLAVGTAAGQIKTGSLCRSDRVSKYNQLLRIEELTKAVYRGKAEFKGLN.

Q166 provides a ligand contact to (2R)-2-phosphoglycerate. The Proton donor role is filled by E208. Residues D245, E289, and D316 each coordinate Mg(2+). (2R)-2-phosphoglycerate contacts are provided by K341, R370, S371, and K392. The Proton acceptor role is filled by K341.

It belongs to the enolase family. As to quaternary structure, component of the RNA degradosome, a multiprotein complex involved in RNA processing and mRNA degradation. It depends on Mg(2+) as a cofactor.

Its subcellular location is the cytoplasm. The protein resides in the secreted. It localises to the cell surface. The catalysed reaction is (2R)-2-phosphoglycerate = phosphoenolpyruvate + H2O. It participates in carbohydrate degradation; glycolysis; pyruvate from D-glyceraldehyde 3-phosphate: step 4/5. Its function is as follows. Catalyzes the reversible conversion of 2-phosphoglycerate (2-PG) into phosphoenolpyruvate (PEP). It is essential for the degradation of carbohydrates via glycolysis. This is Enolase from Acinetobacter baumannii (strain AB307-0294).